The chain runs to 1124 residues: Anillin (1124 aa).

N-acetylmethionine is present on M1. The segment covering 1–25 (MDPFTEKLLERTRARRENLQRKMAE) has biased composition (basic and acidic residues). The tract at residues 1 to 45 (MDPFTEKLLERTRARRENLQRKMAERPTAAPRSMTHAKRARQPLS) is required for ubiquitination. Disordered stretches follow at residues 1–113 (MDPF…ADTI) and 136–196 (ATAA…ATPV). The interval 1-155 (MDPFTEKLLE…MQKLAEQRRR (155 aa)) is interaction with CD2AP. Positions 1–230 (MDPFTEKLLE…AKQNSVQEQP (230 aa)) are nuclear localization. 2 positions are modified to phosphoserine: S54 and S72. The span at 77 to 96 (VEVSNLENKQPVESTSAKSC) shows a compositional bias: polar residues. Residues S97 and S102 each carry the phosphoserine modification. Positions 97–108 (SPSPVSPQVQPQ) are enriched in low complexity. A compositionally biased stretch (basic and acidic residues) spans 148-158 (KLAEQRRRWDN). Residues S172 and S182 each carry the phosphoserine modification. T194 carries the phosphothreonine modification. Phosphoserine occurs at positions 225 and 252. Residues 231-676 (GTACLSKFSS…RDLLYSIDAY (446 aa)) are interaction with F-actin. K254 is covalently cross-linked (Glycyl lysine isopeptide (Lys-Gly) (interchain with G-Cter in SUMO1)). Phosphoserine is present on S261. A compositionally biased stretch (polar residues) spans 294-305 (TSPVKSTTSITD). The interval 294 to 328 (TSPVKSTTSITDAKSCEGQNPELLPKTPISPLKTG) is disordered. T320 bears the Phosphothreonine mark. A phosphoserine mark is found at S323 and S339. T364 bears the Phosphothreonine mark. K371 carries the N6-acetyllysine modification. A compositionally biased stretch (basic and acidic residues) spans 380-389 (RCQEHSKESP). The disordered stretch occupies residues 380–399 (RCQEHSKESPARSTPHRTPI). Phosphothreonine occurs at positions 397 and 401. S417, S419, S449, S485, S518, S553, and S561 each carry phosphoserine. Residues 569 to 604 (FSDVLEEGELDMEKSQEEMDQALAESSEEQEDALNI) are a coiled coil. 2 disordered regions span residues 579–600 (DMEK…EQED) and 625–664 (LVST…SLGS). Basic and acidic residues-rich tracts occupy residues 631 to 644 (LELK…ESPK) and 654 to 664 (PRAESGDSLGS). Residues S637, S642, S658, S661, and S664 each carry the phosphoserine modification. At Y671 the chain carries Phosphotyrosine. 4 positions are modified to phosphoserine: S678, S688, S792, and S927. The segment at 730–1124 (QQTVIYQASQ…DACYKPIGKP (395 aa)) is localization to the cleavage furrow. One can recognise a PH domain in the interval 983–1107 (SVEERGFLTI…WMQKLNQVLV (125 aa)).

As to quaternary structure, interacts with F-actin. Interacts with CD2AP. May interact with RHOA. Interacts with FZR1/CDH1 during mitotic exit. Post-translationally, phosphorylated during mitosis. Ubiquitinated, and this requires FZR1/CDH1. Ubiquitously expressed. Present at highest levels in the brain, at high levels in the placenta and testis, at intermediate levels in the intestine, ovary, skeletal muscle and thymus and at lower levels in heart, kidney, liver, lung, pancreas, prostate and spleen. In the kidney, it is widely expressed in tubules, but sparsely expressed in the glomerulus. Expression is significantly increased in renal biopsy specimens from idiopathic FSGS. Overexpressed in many tumor types including breast, colorectal, endometrial, hepatic, kidney, lung, ovarian and pancreatic tumors.

The protein resides in the nucleus. Its subcellular location is the cytoplasm. It is found in the cytoskeleton. It localises to the cell cortex. The protein localises to the cell projection. The protein resides in the bleb. In terms of biological role, required for cytokinesis. Essential for the structural integrity of the cleavage furrow and for completion of cleavage furrow ingression. Plays a role in bleb assembly during metaphase and anaphase of mitosis. May play a significant role in podocyte cell migration. This is Anillin (ANLN) from Homo sapiens (Human).